A 55-amino-acid polypeptide reads, in one-letter code: Conotoxin vc5b (55 aa).

Residues 1 to 15 (VILLLLIASAPSVDA) form the signal peptide. Residues 16–41 (QPKTKDDVPLAPLHDNAKSALQHLNQ) constitute a propeptide that is removed on maturation. A Glutamine amide modification is found at Gln-53.

Post-translationally, contains 2 disulfide bonds that can be either 'C1-C3, C2-C4' or 'C1-C4, C2-C3', since these disulfide connectivities have been observed for conotoxins with cysteine framework V (for examples, see AC P0DQQ7 and AC P81755). As to expression, expressed by the venom duct.

The protein localises to the secreted. This is Conotoxin vc5b from Conus victoriae (Queen Victoria cone).